The chain runs to 98 residues: Cystatin-A (98 aa).

Position 1 is an N-acetylmethionine (Met-1). A Secondary area of contact motif is present at residues 46-50 (QVVAG).

It belongs to the cystatin family.

The protein resides in the cytoplasm. This is an intracellular thiol proteinase inhibitor. This Felis catus (Cat) protein is Cystatin-A (CSTA).